The sequence spans 206 residues: Large ribosomal subunit protein uL4 (206 aa).

The protein belongs to the universal ribosomal protein uL4 family. Part of the 50S ribosomal subunit.

One of the primary rRNA binding proteins, this protein initially binds near the 5'-end of the 23S rRNA. It is important during the early stages of 50S assembly. It makes multiple contacts with different domains of the 23S rRNA in the assembled 50S subunit and ribosome. Functionally, forms part of the polypeptide exit tunnel. The chain is Large ribosomal subunit protein uL4 from Jannaschia sp. (strain CCS1).